The following is a 262-amino-acid chain: 3-deoxy-manno-octulosonate cytidylyltransferase (262 aa).

Belongs to the KdsB family.

It localises to the cytoplasm. It catalyses the reaction 3-deoxy-alpha-D-manno-oct-2-ulosonate + CTP = CMP-3-deoxy-beta-D-manno-octulosonate + diphosphate. It participates in nucleotide-sugar biosynthesis; CMP-3-deoxy-D-manno-octulosonate biosynthesis; CMP-3-deoxy-D-manno-octulosonate from 3-deoxy-D-manno-octulosonate and CTP: step 1/1. The protein operates within bacterial outer membrane biogenesis; lipopolysaccharide biosynthesis. In terms of biological role, activates KDO (a required 8-carbon sugar) for incorporation into bacterial lipopolysaccharide in Gram-negative bacteria. The protein is 3-deoxy-manno-octulosonate cytidylyltransferase of Koribacter versatilis (strain Ellin345).